The primary structure comprises 47 residues: uncharacterized protein (47 aa).

This is an uncharacterized protein from Saccharomyces cerevisiae (strain ATCC 204508 / S288c) (Baker's yeast).